Here is a 126-residue protein sequence, read N- to C-terminus: Histone H2B 1/2/3/4/6 (126 aa).

Residues 1–12 (MPEPAKSAPAPK) show a composition bias toward low complexity. A disordered region spans residues 1-36 (MPEPAKSAPAPKKGSKKAVTKTQKKGDKKRKKSRKE). N6-acetyllysine is present on residues Lys-6 and Lys-13. Basic residues predominate over residues 13 to 34 (KGSKKAVTKTQKKGDKKRKKSR). Ser-15 bears the Phosphoserine mark. 2 positions are modified to N6-acetyllysine: Lys-16 and Lys-21. Lys-121 is covalently cross-linked (Glycyl lysine isopeptide (Lys-Gly) (interchain with G-Cter in ubiquitin)).

The protein belongs to the histone H2B family. As to quaternary structure, the nucleosome is a histone octamer containing two molecules each of H2A, H2B, H3 and H4 assembled in one H3-H4 heterotetramer and two H2A-H2B heterodimers. The octamer wraps approximately 147 bp of DNA. Monoubiquitination of Lys-121 by the BRE1 gives a specific tag for epigenetic transcriptional activation and is also prerequisite for histone H3 'Lys-4' and 'Lys-79' methylation. In terms of processing, phosphorylated on Ser-15 during apoptosis; which facilitates apoptotic chromatin condensation.

It localises to the nucleus. Its subcellular location is the chromosome. In terms of biological role, core component of nucleosome. Nucleosomes wrap and compact DNA into chromatin, limiting DNA accessibility to the cellular machineries which require DNA as a template. Histones thereby play a central role in transcription regulation, DNA repair, DNA replication and chromosomal stability. DNA accessibility is regulated via a complex set of post-translational modifications of histones, also called histone code, and nucleosome remodeling. Has broad-spectrum antibacterial activity. May be important in the antimicrobial defenses of chick reproductive system during follicle development in the ovary and egg formation in the oviduct. The protein is Histone H2B 1/2/3/4/6 (H2B-I) of Gallus gallus (Chicken).